The primary structure comprises 514 residues: Bifunctional purine biosynthesis protein PurH (514 aa).

Positions Met1–Cys146 constitute an MGS-like domain.

This sequence belongs to the PurH family.

The enzyme catalyses (6R)-10-formyltetrahydrofolate + 5-amino-1-(5-phospho-beta-D-ribosyl)imidazole-4-carboxamide = 5-formamido-1-(5-phospho-D-ribosyl)imidazole-4-carboxamide + (6S)-5,6,7,8-tetrahydrofolate. The catalysed reaction is IMP + H2O = 5-formamido-1-(5-phospho-D-ribosyl)imidazole-4-carboxamide. Its pathway is purine metabolism; IMP biosynthesis via de novo pathway; 5-formamido-1-(5-phospho-D-ribosyl)imidazole-4-carboxamide from 5-amino-1-(5-phospho-D-ribosyl)imidazole-4-carboxamide (10-formyl THF route): step 1/1. The protein operates within purine metabolism; IMP biosynthesis via de novo pathway; IMP from 5-formamido-1-(5-phospho-D-ribosyl)imidazole-4-carboxamide: step 1/1. The sequence is that of Bifunctional purine biosynthesis protein PurH from Cyanothece sp. (strain PCC 7425 / ATCC 29141).